Consider the following 546-residue polypeptide: Chaperonin GroEL (546 aa).

ATP is bound by residues 30–33 (TLGP), K51, 87–91 (DGTTT), G415, 479–481 (NAA), and D495. The segment at 525 to 546 (PEPKKDMPPMPGGGMGGMGGMY) is disordered. A compositionally biased stretch (gly residues) spans 536-546 (GGGMGGMGGMY).

The protein belongs to the chaperonin (HSP60) family. In terms of assembly, forms a cylinder of 14 subunits composed of two heptameric rings stacked back-to-back. Interacts with the co-chaperonin GroES.

It localises to the cytoplasm. It carries out the reaction ATP + H2O + a folded polypeptide = ADP + phosphate + an unfolded polypeptide.. In terms of biological role, together with its co-chaperonin GroES, plays an essential role in assisting protein folding. The GroEL-GroES system forms a nano-cage that allows encapsulation of the non-native substrate proteins and provides a physical environment optimized to promote and accelerate protein folding. This chain is Chaperonin GroEL, found in Solidesulfovibrio magneticus (strain ATCC 700980 / DSM 13731 / RS-1) (Desulfovibrio magneticus).